The sequence spans 247 residues: Probable transcriptional regulatory protein lpl1249 (247 aa).

The protein belongs to the TACO1 family.

It localises to the cytoplasm. The polypeptide is Probable transcriptional regulatory protein lpl1249 (Legionella pneumophila (strain Lens)).